The primary structure comprises 312 residues: Porphobilinogen deaminase (312 aa).

Residue cysteine 235 is modified to S-(dipyrrolylmethanemethyl)cysteine.

The protein belongs to the HMBS family. Monomer. The cofactor is dipyrromethane.

It catalyses the reaction 4 porphobilinogen + H2O = hydroxymethylbilane + 4 NH4(+). Its pathway is porphyrin-containing compound metabolism; protoporphyrin-IX biosynthesis; coproporphyrinogen-III from 5-aminolevulinate: step 2/4. Tetrapolymerization of the monopyrrole PBG into the hydroxymethylbilane pre-uroporphyrinogen in several discrete steps. This chain is Porphobilinogen deaminase, found in Mycolicibacterium gilvum (strain PYR-GCK) (Mycobacterium gilvum (strain PYR-GCK)).